We begin with the raw amino-acid sequence, 307 residues long: Homoserine O-acetyltransferase (307 aa).

The Acyl-thioester intermediate role is filled by Cys-142. The substrate site is built by Lys-163 and Ser-192. His-235 functions as the Proton acceptor in the catalytic mechanism. Glu-237 is an active-site residue. Arg-249 is a substrate binding site.

The protein belongs to the MetA family.

Its subcellular location is the cytoplasm. The enzyme catalyses L-homoserine + acetyl-CoA = O-acetyl-L-homoserine + CoA. It participates in amino-acid biosynthesis; L-methionine biosynthesis via de novo pathway; O-acetyl-L-homoserine from L-homoserine: step 1/1. Functionally, transfers an acetyl group from acetyl-CoA to L-homoserine, forming acetyl-L-homoserine. In Desulfitobacterium hafniense (strain DSM 10664 / DCB-2), this protein is Homoserine O-acetyltransferase.